Here is a 456-residue protein sequence, read N- to C-terminus: Yersinopine synthase (456 aa).

Residues 12–15, 35–40, and threonine 154 each bind NADP(+); these read AGPA and NRPSTK. Histidine 242 serves as the catalytic Proton donor/acceptor.

It belongs to the staphylopine dehydrogenase family. As to quaternary structure, homodimer.

It catalyses the reaction yersinopine + NADP(+) + H2O = (2S)-2-amino-4-{[(1S)-1-carboxy-2-(1H-imidazol-4-yl)ethyl]amino}butanoate + pyruvate + NADPH + H(+). Its function is as follows. Catalyzes the NADPH-dependent reductive condensation of pyruvate to the intermediate formed by the adjacently encoded enzyme y2836, namely (2S)-2-amino-4-{[(1S)-1-carboxy-2-(1H-imidazol-4-yl)ethyl]amino}butanoate, leading to the production of yersinopine. This is the last step in the biosynthesis of the metallophore yersinopine, which is involved in metal acquisition and thus enables bacterial growth inside the host, where metal access is limited. Therefore, this enzyme probably contributes to Yersinia virulence. Cannot use alpha-ketoglutarate in place of pyruvate, and displays only poor efficiency with oxaloacetate and glyoxylate. The polypeptide is Yersinopine synthase (Yersinia pestis).